The following is a 225-amino-acid chain: Ribonuclease 3 (225 aa).

An RNase III domain is found at 7 to 132 (MKAFEARLGY…VIAAVYRDGG (126 aa)). Glu45 contributes to the Mg(2+) binding site. Residue Asp49 is part of the active site. The Mg(2+) site is built by Asp118 and Glu121. Glu121 is an active-site residue. Residues 157 to 225 (DAKTALQEWA…AARKLLDSLD (69 aa)) enclose the DRBM domain.

Belongs to the ribonuclease III family. Homodimer. Requires Mg(2+) as cofactor.

Its subcellular location is the cytoplasm. The enzyme catalyses Endonucleolytic cleavage to 5'-phosphomonoester.. In terms of biological role, digests double-stranded RNA. Involved in the processing of primary rRNA transcript to yield the immediate precursors to the large and small rRNAs (23S and 16S). Processes some mRNAs, and tRNAs when they are encoded in the rRNA operon. Processes pre-crRNA and tracrRNA of type II CRISPR loci if present in the organism. In Ruegeria pomeroyi (strain ATCC 700808 / DSM 15171 / DSS-3) (Silicibacter pomeroyi), this protein is Ribonuclease 3.